The following is a 228-amino-acid chain: Small ribosomal subunit protein uS3 (228 aa).

The 69-residue stretch at 39 to 107 (VRAYLQDKLK…PVHINIEEIR (69 aa)) folds into the KH type-2 domain.

Belongs to the universal ribosomal protein uS3 family. As to quaternary structure, part of the 30S ribosomal subunit. Forms a tight complex with proteins S10 and S14.

Functionally, binds the lower part of the 30S subunit head. Binds mRNA in the 70S ribosome, positioning it for translation. The protein is Small ribosomal subunit protein uS3 of Ectopseudomonas mendocina (strain ymp) (Pseudomonas mendocina).